The sequence spans 337 residues: UDP-3-O-acylglucosamine N-acyltransferase 1 (337 aa).

The active-site Proton acceptor is the His-238.

The protein belongs to the transferase hexapeptide repeat family. LpxD subfamily. Homotrimer.

It carries out the reaction a UDP-3-O-[(3R)-3-hydroxyacyl]-alpha-D-glucosamine + a (3R)-hydroxyacyl-[ACP] = a UDP-2-N,3-O-bis[(3R)-3-hydroxyacyl]-alpha-D-glucosamine + holo-[ACP] + H(+). It functions in the pathway bacterial outer membrane biogenesis; LPS lipid A biosynthesis. In terms of biological role, catalyzes the N-acylation of UDP-3-O-acylglucosamine using 3-hydroxyacyl-ACP as the acyl donor. Is involved in the biosynthesis of lipid A, a phosphorylated glycolipid that anchors the lipopolysaccharide to the outer membrane of the cell. This Koribacter versatilis (strain Ellin345) protein is UDP-3-O-acylglucosamine N-acyltransferase 1.